Here is a 393-residue protein sequence, read N- to C-terminus: MHNSPAVSSAKSFDLTSTAFLIVAFLTGIAGALQTPTLSIFLTDEVHARPAMVGFFFTGSAVIGILVSQFLAGRSDKRGDRKSLIVFCCLLGVLACTLFAWNRNYFVLLFVGVFLSSFGSTANPQMFALAREHADKTGREAVMFSSFLRAQVSLAWVIGPPLAYALAMGFSFTVMYLSAAVAFIVCGVMVWLFLPSMRKELPLATGTIEAPRRNRRDTLLLFVICTLMWGSNSLYIINMPLFIINELHLPEKLAGVMMGTAAGLEIPTMLIAGYFAKRLGKRFLMRVAAVGGVCFYAGMLMAHSPVILLGLQLLNAIFIGILGGIGMLYFQDLMPGQAGSATTLYTNTSRVGWIIAGSVAGIVAEIWNYHAVFWFAMVMIIATLFCLLRIKDV.

The next 12 helical transmembrane spans lie at 13–33 (FDLT…AGAL), 51–71 (AMVG…SQFL), 82–102 (KSLI…FAWN), 106–126 (FVLL…NPQM), 152–172 (VSLA…GFSF), 174–194 (VMYL…WLFL), 219–239 (LLLF…IINM), 253–273 (LAGV…LIAG), 283–303 (FLMR…LMAH), 306–326 (VILL…GGIG), 344–364 (LYTN…GIVA), and 366–386 (IWNY…TLFC).

It belongs to the major facilitator superfamily. Set transporter family.

It localises to the cell inner membrane. In terms of biological role, involved in the efflux of sugars. The physiological role may be the detoxification of non-metabolizable sugar analogs. Can transport lactose and glucose. This chain is Sugar efflux transporter B (setB), found in Escherichia coli (strain K12).